A 139-amino-acid chain; its full sequence is Small ribosomal subunit protein bS16 (139 aa).

The segment at 84-139 (KGEPAPAPLLQPAEKAARPSFEAIGGEDEGKGEAITQKKKADKRDEAAAESSASEA) is disordered.

This sequence belongs to the bacterial ribosomal protein bS16 family.

In Streptomyces lividans, this protein is Small ribosomal subunit protein bS16.